Here is a 362-residue protein sequence, read N- to C-terminus: tRNA-specific 2-thiouridylase MnmA (362 aa).

ATP contacts are provided by residues 6–13 (AMSGGVDS) and L32. The Nucleophile role is filled by C101. A disulfide bridge connects residues C101 and C197. An ATP-binding site is contributed by G125. Residues 147–149 (KDQ) are interaction with tRNA. C197 functions as the Cysteine persulfide intermediate in the catalytic mechanism.

It belongs to the MnmA/TRMU family.

It localises to the cytoplasm. The enzyme catalyses S-sulfanyl-L-cysteinyl-[protein] + uridine(34) in tRNA + AH2 + ATP = 2-thiouridine(34) in tRNA + L-cysteinyl-[protein] + A + AMP + diphosphate + H(+). In terms of biological role, catalyzes the 2-thiolation of uridine at the wobble position (U34) of tRNA, leading to the formation of s(2)U34. This is tRNA-specific 2-thiouridylase MnmA from Acidothermus cellulolyticus (strain ATCC 43068 / DSM 8971 / 11B).